A 211-amino-acid chain; its full sequence is LexA repressor (211 aa).

The segment at residues 30-50 (RVEIAREIGFKSPNAAEEHLK) is a DNA-binding region (H-T-H motif). Catalysis depends on for autocatalytic cleavage activity residues Ser128 and Lys165.

This sequence belongs to the peptidase S24 family. In terms of assembly, homodimer.

It catalyses the reaction Hydrolysis of Ala-|-Gly bond in repressor LexA.. Functionally, represses a number of genes involved in the response to DNA damage (SOS response), including recA and lexA. In the presence of single-stranded DNA, RecA interacts with LexA causing an autocatalytic cleavage which disrupts the DNA-binding part of LexA, leading to derepression of the SOS regulon and eventually DNA repair. The polypeptide is LexA repressor (Haemophilus ducreyi (strain 35000HP / ATCC 700724)).